We begin with the raw amino-acid sequence, 361 residues long: RNA 3'-terminal phosphate cyclase (361 aa).

Residues Gln-109 and His-293–Gln-297 each bind ATP. His-319 (tele-AMP-histidine intermediate) is an active-site residue.

Belongs to the RNA 3'-terminal cyclase family. Type 1 subfamily.

The protein resides in the cytoplasm. The enzyme catalyses a 3'-end 3'-phospho-ribonucleotide-RNA + ATP = a 3'-end 2',3'-cyclophospho-ribonucleotide-RNA + AMP + diphosphate. In terms of biological role, catalyzes the conversion of 3'-phosphate to a 2',3'-cyclic phosphodiester at the end of RNA. The mechanism of action of the enzyme occurs in 3 steps: (A) adenylation of the enzyme by ATP; (B) transfer of adenylate to an RNA-N3'P to produce RNA-N3'PP5'A; (C) and attack of the adjacent 2'-hydroxyl on the 3'-phosphorus in the diester linkage to produce the cyclic end product. The biological role of this enzyme is unknown but it is likely to function in some aspects of cellular RNA processing. This Methylococcus capsulatus (strain ATCC 33009 / NCIMB 11132 / Bath) protein is RNA 3'-terminal phosphate cyclase.